A 413-amino-acid chain; its full sequence is Arginine biosynthesis bifunctional protein ArgJ (413 aa).

The substrate site is built by Thr160, Lys186, Thr197, Glu284, Asn408, and Ser413. Catalysis depends on Thr197, which acts as the Nucleophile.

The protein belongs to the ArgJ family. In terms of assembly, heterotetramer of two alpha and two beta chains.

It is found in the cytoplasm. The catalysed reaction is N(2)-acetyl-L-ornithine + L-glutamate = N-acetyl-L-glutamate + L-ornithine. It carries out the reaction L-glutamate + acetyl-CoA = N-acetyl-L-glutamate + CoA + H(+). It participates in amino-acid biosynthesis; L-arginine biosynthesis; L-ornithine and N-acetyl-L-glutamate from L-glutamate and N(2)-acetyl-L-ornithine (cyclic): step 1/1. It functions in the pathway amino-acid biosynthesis; L-arginine biosynthesis; N(2)-acetyl-L-ornithine from L-glutamate: step 1/4. Its function is as follows. Catalyzes two activities which are involved in the cyclic version of arginine biosynthesis: the synthesis of N-acetylglutamate from glutamate and acetyl-CoA as the acetyl donor, and of ornithine by transacetylation between N(2)-acetylornithine and glutamate. This Burkholderia pseudomallei (strain K96243) protein is Arginine biosynthesis bifunctional protein ArgJ.